Consider the following 397-residue polypeptide: Mitochondrial inner membrane magnesium transporter LPE10 (397 aa).

The N-terminal 37 residues, 1–37 (MLLVNRAITLNLVKRCCWRSTMFMTPKRFLGTSEEES), are a transit peptide targeting the mitochondrion. The chain crosses the membrane as a helical span at residues 316 to 336 (LMLLGIRFSIGMLSLGGPIFI). The short motif at 340 to 343 (YGMN) is the YGMN element. The chain crosses the membrane as a helical span at residues 354–374 (GFIAASAIGMISLGALYFYSI).

It belongs to the CorA metal ion transporter (MIT) (TC 1.A.35) family. As to quaternary structure, forms homooligomers. Interacts with MRS2.

Its subcellular location is the mitochondrion inner membrane. In terms of biological role, mitochondrial inner membrane magnesium transporter required for mitochondrial magnesium homeostasis. Modulates the conductance of the MRS2 channel. Involved in the splicing of mRNA group II introns in mitochondria by affecting mitochondrial magnesium concentrations, which are critical for group II intron splicing. The sequence is that of Mitochondrial inner membrane magnesium transporter LPE10 (LPE10) from Candida glabrata (strain ATCC 2001 / BCRC 20586 / JCM 3761 / NBRC 0622 / NRRL Y-65 / CBS 138) (Yeast).